A 103-amino-acid polypeptide reads, in one-letter code: Large ribosomal subunit protein eL42 (103 aa).

Residues 37-56 (GKRRYDRKQSGFGGQTKPVF) are disordered.

The protein belongs to the eukaryotic ribosomal protein eL42 family.

This Dictyostelium discoideum (Social amoeba) protein is Large ribosomal subunit protein eL42 (rpl36a).